Consider the following 143-residue polypeptide: Transcription antitermination protein NusB (143 aa).

The protein belongs to the NusB family.

Its function is as follows. Involved in transcription antitermination. Required for transcription of ribosomal RNA (rRNA) genes. Binds specifically to the boxA antiterminator sequence of the ribosomal RNA (rrn) operons. This chain is Transcription antitermination protein NusB, found in Dehalococcoides mccartyi (strain CBDB1).